The chain runs to 249 residues: uncharacterized protein (249 aa).

A divalent metal cation contacts are provided by H10, H12, E95, H129, H150, and D198.

This sequence belongs to the metallo-dependent hydrolases superfamily. TatD-type hydrolase family. It depends on a divalent metal cation as a cofactor.

This is an uncharacterized protein from Methanocaldococcus jannaschii (strain ATCC 43067 / DSM 2661 / JAL-1 / JCM 10045 / NBRC 100440) (Methanococcus jannaschii).